The chain runs to 201 residues: Probable GTP-binding protein EngB (201 aa).

Positions 22–197 (TFPEYAFIGR…LNYIESINKE (176 aa)) constitute an EngB-type G domain. GTP is bound by residues 30 to 37 (GRSNVGKS), 57 to 61 (GKTML), 75 to 78 (DLPG), 142 to 145 (TKAD), and 175 to 178 (ITSS). Residues serine 37 and threonine 59 each contribute to the Mg(2+) site.

The protein belongs to the TRAFAC class TrmE-Era-EngA-EngB-Septin-like GTPase superfamily. EngB GTPase family. Mg(2+) serves as cofactor.

Functionally, necessary for normal cell division and for the maintenance of normal septation. The protein is Probable GTP-binding protein EngB of Bacteroides fragilis (strain ATCC 25285 / DSM 2151 / CCUG 4856 / JCM 11019 / LMG 10263 / NCTC 9343 / Onslow / VPI 2553 / EN-2).